A 433-amino-acid chain; its full sequence is sn-glycerol-3-phosphate-binding periplasmic protein UgpB (433 aa).

The first 25 residues, 1–25, serve as a signal peptide directing secretion; the sequence is MFTRLITTSALTGAIALTIGSQAFA. Sn-glycerol 3-phosphate-binding residues include Tyr-67, Asp-91, Ser-146, Ser-273, Gly-307, Tyr-346, and Arg-397.

This sequence belongs to the bacterial solute-binding protein 1 family. The complex is composed of two ATP-binding proteins (UgpC), two transmembrane proteins (UgpA and UgpE) and a solute-binding protein (UgpB).

It is found in the periplasm. Part of the ABC transporter complex UgpBAEC involved in sn-glycerol-3-phosphate (G3P) import. Binds G3P. The sequence is that of sn-glycerol-3-phosphate-binding periplasmic protein UgpB (ugpB) from Brucella suis biovar 1 (strain 1330).